A 333-amino-acid polypeptide reads, in one-letter code: Sphingomyelinase C (333 aa).

Residues Met1–Gln26 form the signal peptide. An intrachain disulfide couples Cys150 to Cys186.

The protein belongs to the neutral sphingomyelinase family. Requires Mg(2+) as cofactor. The N-terminus is blocked.

The protein resides in the secreted. The enzyme catalyses a sphingomyelin + H2O = phosphocholine + an N-acylsphing-4-enine + H(+). With respect to regulation, activated by cobalt and manganese ions. Required, with sphingomyelinase, to effect target cell lysis (hemolysis). This is Sphingomyelinase C (cerB) from Bacillus cereus.